Consider the following 307-residue polypeptide: MPKKCRHLLQTSDLSLDEIKLLLNKASVYANDFNAVSLETKEKMHNKIIVALFFENSTRTVSSFEIASLRLGAKIVKLNMQTSSTSKGETLIDTFKNIHAMQPDAIITRHAFSSAPFKLAEFSQCPLINAGSGMSAHPTQALLDLLTLYQHFGGLENLKGKKIAFIGDVKNSRVANSNIKLLQRLGLEIMLCAPSSMLPSTPLRTTHNIEEAIAFADILMSLRTQTERHNAPIFASLKDYGNTYCITQKRLSTHAKNKEIIILHPGPVHRDIDIESAVLEDKRSKVLEQVKNGVAMRMAVLEFLLSD.

Positions 59 and 60 each coordinate carbamoyl phosphate. An L-aspartate-binding site is contributed by Lys87. Residues Arg109, His137, and Gln140 each coordinate carbamoyl phosphate. Residues Arg173 and Arg223 each coordinate L-aspartate. The carbamoyl phosphate site is built by Gly266 and Pro267.

It belongs to the aspartate/ornithine carbamoyltransferase superfamily. ATCase family. As to quaternary structure, heterododecamer (2C3:3R2) of six catalytic PyrB chains organized as two trimers (C3), and six regulatory PyrI chains organized as three dimers (R2).

The catalysed reaction is carbamoyl phosphate + L-aspartate = N-carbamoyl-L-aspartate + phosphate + H(+). Its pathway is pyrimidine metabolism; UMP biosynthesis via de novo pathway; (S)-dihydroorotate from bicarbonate: step 2/3. Catalyzes the condensation of carbamoyl phosphate and aspartate to form carbamoyl aspartate and inorganic phosphate, the committed step in the de novo pyrimidine nucleotide biosynthesis pathway. In Helicobacter pylori (strain G27), this protein is Aspartate carbamoyltransferase catalytic subunit.